The sequence spans 137 residues: Small ribosomal subunit protein uS12 (137 aa).

The disordered stretch occupies residues 1-57; it reads MPTINQLVRKPRRAQVTKSKSPAMNVGYNSRKKVQTKLASPQKRGVATRVGTMTPKK. Residue Asp102 is modified to 3-methylthioaspartic acid.

The protein belongs to the universal ribosomal protein uS12 family. In terms of assembly, part of the 30S ribosomal subunit. Contacts proteins S8 and S17. May interact with IF1 in the 30S initiation complex.

Its function is as follows. With S4 and S5 plays an important role in translational accuracy. In terms of biological role, interacts with and stabilizes bases of the 16S rRNA that are involved in tRNA selection in the A site and with the mRNA backbone. Located at the interface of the 30S and 50S subunits, it traverses the body of the 30S subunit contacting proteins on the other side and probably holding the rRNA structure together. The combined cluster of proteins S8, S12 and S17 appears to hold together the shoulder and platform of the 30S subunit. This Lactococcus lactis subsp. lactis (strain IL1403) (Streptococcus lactis) protein is Small ribosomal subunit protein uS12.